Reading from the N-terminus, the 78-residue chain is Acyl carrier protein (78 aa).

One can recognise a Carrier domain in the interval 2-77 (STIEERVKKI…AAIDYVNSHQ (76 aa)). Residue serine 37 is modified to O-(pantetheine 4'-phosphoryl)serine.

Belongs to the acyl carrier protein (ACP) family. Post-translationally, 4'-phosphopantetheine is transferred from CoA to a specific serine of apo-ACP by AcpS. This modification is essential for activity because fatty acids are bound in thioester linkage to the sulfhydryl of the prosthetic group.

Its subcellular location is the cytoplasm. The protein operates within lipid metabolism; fatty acid biosynthesis. Functionally, carrier of the growing fatty acid chain in fatty acid biosynthesis. This is Acyl carrier protein from Pseudomonas putida (strain W619).